Consider the following 221-residue polypeptide: MRLILLGAPGAGKGTQAKFICEKFGIPQISTGDMLRAAVKAGTPLGVEAKKVMDAGGLVSDDIIIGLVKDRLKQDDCKSGYLFDGFPRTIPQAEAMKDAGVAIDYVLEIDVPFDAIIERMSGRRVHVASGRTYHLKYNPPKTEGVDDETGEPLIQRDDDKEETVKKRLDVYSQQTRPLVDYYSAWAANGDPAAKVAPPKYRKILGVGNVDEITARVFEALK.

Residue 10 to 15 (GAGKGT) participates in ATP binding. The NMP stretch occupies residues 30-59 (STGDMLRAAVKAGTPLGVEAKKVMDAGGLV). AMP is bound by residues Thr-31, Arg-36, 57–59 (GLV), 85–88 (GFPR), and Gln-92. An LID region spans residues 122-159 (GRRVHVASGRTYHLKYNPPKTEGVDDETGEPLIQRDDD). ATP is bound by residues Arg-123 and 132–133 (TY). Residues 138 to 159 (NPPKTEGVDDETGEPLIQRDDD) are disordered. Residues Arg-156 and Arg-167 each coordinate AMP. ATP is bound at residue Gly-207.

This sequence belongs to the adenylate kinase family. As to quaternary structure, monomer.

The protein resides in the cytoplasm. The enzyme catalyses AMP + ATP = 2 ADP. It functions in the pathway purine metabolism; AMP biosynthesis via salvage pathway; AMP from ADP: step 1/1. In terms of biological role, catalyzes the reversible transfer of the terminal phosphate group between ATP and AMP. Plays an important role in cellular energy homeostasis and in adenine nucleotide metabolism. In Cupriavidus taiwanensis (strain DSM 17343 / BCRC 17206 / CCUG 44338 / CIP 107171 / LMG 19424 / R1) (Ralstonia taiwanensis (strain LMG 19424)), this protein is Adenylate kinase.